The primary structure comprises 241 residues: Small ribosomal subunit protein uS2 (241 aa).

This sequence belongs to the universal ribosomal protein uS2 family.

This chain is Small ribosomal subunit protein uS2, found in Citrobacter koseri (strain ATCC BAA-895 / CDC 4225-83 / SGSC4696).